Consider the following 907-residue polypeptide: Protein translocase subunit SecA (907 aa).

ATP contacts are provided by residues Q87, 105-109 (GEGKT), and D512. The disordered stretch occupies residues 869 to 897 (AESLSAHTPVVREGEKVGRNDPCPCGSGR). Residues 878–887 (VVREGEKVGR) are compositionally biased toward basic and acidic residues. Residues C891, C893, C902, and H903 each coordinate Zn(2+).

It belongs to the SecA family. Monomer and homodimer. Part of the essential Sec protein translocation apparatus which comprises SecA, SecYEG and auxiliary proteins SecDF-YajC and YidC. Zn(2+) is required as a cofactor.

It localises to the cell inner membrane. It is found in the cytoplasm. It carries out the reaction ATP + H2O + cellular proteinSide 1 = ADP + phosphate + cellular proteinSide 2.. In terms of biological role, part of the Sec protein translocase complex. Interacts with the SecYEG preprotein conducting channel. Has a central role in coupling the hydrolysis of ATP to the transfer of proteins into and across the cell membrane, serving both as a receptor for the preprotein-SecB complex and as an ATP-driven molecular motor driving the stepwise translocation of polypeptide chains across the membrane. This is Protein translocase subunit SecA from Shewanella sediminis (strain HAW-EB3).